A 519-amino-acid chain; its full sequence is FAD-dependent monooxygenase macF (519 aa).

A signal peptide spans 1 to 20 (MTKMTSIIGILMGVLTTATA). The FAD-binding PCMH-type domain occupies 88 to 262 (CRLNASCIVT…TEYDLTTNTG (175 aa)). His-125 is subject to Pros-8alpha-FAD histidine.

Belongs to the oxygen-dependent FAD-linked oxidoreductase family.

It participates in secondary metabolite biosynthesis; terpenoid biosynthesis. In terms of biological role, FAD-dependent monooxygenase; part of the gene cluster that mediates the biosynthesis of macrophorins, isoprenoid epoxycyclohexenones containing cyclized drimane moieties. The first step of the pathway is the synthesis of 6-methylsalicylic acid (6-MSA) by the polyketide synthase macA. 6-MSA is then converted to m-cresol by the decarboxylase macB. The cytochrome P450 monooxygenase macC then catalyzes the oxidation of m-cresol to toluquinol. Epoxidation of toluquinol is then performed by the short chain dehydrogenase macD, with the help of macE, and a further prenylation by macG leads to 7-deacetoxyyanuthone A. The next step is the hydroxylation of C-22 of 7-deacetoxyyanuthone A by the cytochrome P450 monooxygenase macH to yield 22-deacetylyanuthone A. O-Mevalon transferase macI then attaches mevalon to the hydroxyl group of 22-deacetylyanuthone A to produce yanuthone E. The terpene cyclase macJ catalyzes the cyclization of 22-deacetylyanuthone A to macrophorin A. MacJ is also able to catalyze cyclization of yanuthone E and 7-deacetoxyyanuthone A to their corresponding macrophorins. The macJ products can be further modified by macH and macJ, as well as by the FAD-dependent monooxygenase macF, to produce additional macrophorins, including 4'-oxomacrophorin A, 4'-oxomacrophorin D and 4'-oxomacrophorin E. The protein is FAD-dependent monooxygenase macF of Penicillium terrestre.